The chain runs to 488 residues: Probable aldehyde dehydrogenase (488 aa).

240–245 lines the NAD(+) pocket; the sequence is GSSVTG. Catalysis depends on residues E262 and C296.

This sequence belongs to the aldehyde dehydrogenase family.

The catalysed reaction is an aldehyde + NAD(+) + H2O = a carboxylate + NADH + 2 H(+). Its function is as follows. Involved in an alpha-terpineol oxidation system. The chain is Probable aldehyde dehydrogenase (terPE) from Pseudomonas sp.